The primary structure comprises 361 residues: Inactive 2'-5'-oligoadenylate synthase 1D (361 aa).

The protein belongs to the 2-5A synthase family. In terms of assembly, interacts with OAS1A, the interaction inhibits OAS1A catalytic activity. As to expression, expressed specifically in oocytes (at protein level). Expressed at highest level in ovary with lesser amounts in intestine, brain, thymus lung, kidney, liver and uterus.

It is found in the cytoplasm. Its function is as follows. Does not have 2'-5'-oligoadenylate synthetase activity, but can bind double-stranded RNA. May play a role in the control of female fertility, possibly by binding to and inhibiting OAS1A. The chain is Inactive 2'-5'-oligoadenylate synthase 1D from Mus musculus (Mouse).